The following is a 317-amino-acid chain: Probable cell division protein WhiA (317 aa).

The segment at residues 276–310 (TLKELGEMVSGGKISKSGINHRLRKIDDIAEKLRA) is a DNA-binding region (H-T-H motif).

Belongs to the WhiA family.

In terms of biological role, involved in cell division and chromosome segregation. This is Probable cell division protein WhiA from Bacillus thuringiensis (strain Al Hakam).